The following is a 150-amino-acid chain: Large ribosomal subunit protein bL9 (150 aa).

The protein belongs to the bacterial ribosomal protein bL9 family.

In terms of biological role, binds to the 23S rRNA. In Leptothrix cholodnii (strain ATCC 51168 / LMG 8142 / SP-6) (Leptothrix discophora (strain SP-6)), this protein is Large ribosomal subunit protein bL9.